Reading from the N-terminus, the 753-residue chain is 5-methyltetrahydropteroyltriglutamate--homocysteine methyltransferase (753 aa).

5-methyltetrahydropteroyltri-L-glutamate-binding positions include 17–20 (RELK) and lysine 117. Residues 431 to 433 (IGS) and glutamate 484 contribute to the L-homocysteine site. Residues 431–433 (IGS) and glutamate 484 each bind L-methionine. 5-methyltetrahydropteroyltri-L-glutamate is bound by residues 515 to 516 (RC) and tryptophan 561. Position 599 (aspartate 599) interacts with L-homocysteine. Aspartate 599 is a binding site for L-methionine. Position 605 (glutamate 605) interacts with 5-methyltetrahydropteroyltri-L-glutamate. Positions 641, 643, and 665 each coordinate Zn(2+). Histidine 694 serves as the catalytic Proton donor. Cysteine 726 is a Zn(2+) binding site.

The protein belongs to the vitamin-B12 independent methionine synthase family. Zn(2+) serves as cofactor.

The enzyme catalyses 5-methyltetrahydropteroyltri-L-glutamate + L-homocysteine = tetrahydropteroyltri-L-glutamate + L-methionine. Its pathway is amino-acid biosynthesis; L-methionine biosynthesis via de novo pathway; L-methionine from L-homocysteine (MetE route): step 1/1. Catalyzes the transfer of a methyl group from 5-methyltetrahydrofolate to homocysteine resulting in methionine formation. This chain is 5-methyltetrahydropteroyltriglutamate--homocysteine methyltransferase, found in Klebsiella pneumoniae (strain 342).